The primary structure comprises 68 residues: Protein transport protein Sec61 subunit gamma (68 aa).

Topologically, residues 1–32 (MDQVTKFIEPGRQFAKDSIRLVKRCTKPDRKE) are cytoplasmic. The helical transmembrane segment at 33-61 (FQKIAVATAIGFCIMGFIGFFVKLIHIPI) threads the bilayer. Residues 62-68 (NNIIVGS) are Extracellular-facing.

Belongs to the SecE/SEC61-gamma family. In terms of assembly, heterotrimeric complex composed of SEC61-alpha, SEC61-beta and SEC61-gamma.

Its subcellular location is the endoplasmic reticulum membrane. Necessary for protein translocation in the endoplasmic reticulum. This Gryllotalpa orientalis (Oriental mole cricket) protein is Protein transport protein Sec61 subunit gamma (SEC61G).